Here is a 102-residue protein sequence, read N- to C-terminus: MKRILVVMSICAALAFGVSAAMAADGAALYKSCVGCHGADGSKQAMGVGHAVKGQKADELFKKLKGYADGSYGGEKKAVMTNLVKRYSDEEMKAMADYMSKL.

An N-terminal signal peptide occupies residues 1–23 (MKRILVVMSICAALAFGVSAAMA). Positions 33, 36, 37, and 80 each coordinate heme c.

Binds 1 heme c group covalently per subunit.

The protein resides in the periplasm. In terms of biological role, natural electron acceptor for a formate dehydrogenase. The protein is Cytochrome c-553 of Nitratidesulfovibrio vulgaris (strain DSM 19637 / Miyazaki F) (Desulfovibrio vulgaris).